Consider the following 184-residue polypeptide: Large ribosomal subunit protein uL6 (184 aa).

It belongs to the universal ribosomal protein uL6 family. As to quaternary structure, part of the 50S ribosomal subunit.

In terms of biological role, this protein binds to the 23S rRNA, and is important in its secondary structure. It is located near the subunit interface in the base of the L7/L12 stalk, and near the tRNA binding site of the peptidyltransferase center. This chain is Large ribosomal subunit protein uL6, found in Pyrococcus furiosus (strain ATCC 43587 / DSM 3638 / JCM 8422 / Vc1).